A 436-amino-acid polypeptide reads, in one-letter code: 3-ketoacyl-CoA thiolase (436 aa).

The active-site Acyl-thioester intermediate is C99. Catalysis depends on proton acceptor residues H392 and C422.

The protein belongs to the thiolase-like superfamily. Thiolase family. Heterotetramer of two alpha chains (FadJ) and two beta chains (FadI).

It localises to the cytoplasm. The catalysed reaction is an acyl-CoA + acetyl-CoA = a 3-oxoacyl-CoA + CoA. It participates in lipid metabolism; fatty acid beta-oxidation. In terms of biological role, catalyzes the final step of fatty acid oxidation in which acetyl-CoA is released and the CoA ester of a fatty acid two carbons shorter is formed. This chain is 3-ketoacyl-CoA thiolase, found in Escherichia coli O1:K1 / APEC.